Reading from the N-terminus, the 463-residue chain is Cytoplasmic 60S subunit biogenesis factor SPCC550.15c (463 aa).

2 C2H2-type zinc fingers span residues 5-30 and 70-94; these read FACTTCTVAFNNAESQKIHWKSDWHH and QNCEVCNKKFYSEGAYSSHMASKKH. The segment at 109–136 is disordered; it reads KLQSEDASSIASSTLSMGEPVVDSEIEE. Residues 113–124 are compositionally biased toward polar residues; the sequence is EDASSIASSTLS. Phosphoserine occurs at positions 150 and 155. Residues 155 to 189 form a disordered region; the sequence is SLHGRESEPSKTELATSIPQSNEASKSHLFTQEPT. Residues 167–188 show a composition bias toward polar residues; that stretch reads ELATSIPQSNEASKSHLFTQEP. 2 C2H2-type zinc fingers span residues 208–231 and 259–283; these read RDCLFCAASFSSFDTCKKHMKASH and FTCLTCNREFKSLEAVRAHMQQKGH. The segment covering 317 to 338 has biased composition (acidic residues); sequence TVVEEDGSSGEGDWEDVSDDSD. 2 disordered regions span residues 317-341 and 444-463; these read TVVEEDGSSGEGDWEDVSDDSDNSS and ANKMGIKNNTKKHFRDALLQ.

The protein belongs to the REI1 family. As to quaternary structure, associates with nascent pre-60S particles that have not yet entered the translating pool, and is released from mature 60S subunits.

The protein localises to the cytoplasm. Pre-60S-associated factor involved in the cytoplasmic maturation of the 60S subunit. Involved in the dissociation and recycling of other late pre-60S factors before newly synthesized large ribosomal subunits enter translation. The protein is Cytoplasmic 60S subunit biogenesis factor SPCC550.15c of Schizosaccharomyces pombe (strain 972 / ATCC 24843) (Fission yeast).